A 1996-amino-acid chain; its full sequence is Non-reducing polyketide synthase atnG (1996 aa).

Residues 9 to 245 (FLFGDQADAP…AELPAFGAVH (237 aa)) form an N-terminal acylcarrier protein transacylase (SAT) domain region. Residues 366 to 794 (SGSVAVIGMS…GGNSCFVLEE (429 aa)) enclose the Ketosynthase family 3 (KS3) domain. Residues C538, H673, and H713 each act as for beta-ketoacyl synthase activity in the active site. Residues 891–1150 (AFAFTGQGAH…VKYTQAISHC (260 aa)) form a malonyl-CoA:ACP transacylase (MAT) domain region. The active-site For acyl/malonyl transferase activity is the S982. The tract at residues 1263-1392 (HHLVSQDDNG…CCIRQTDEQD (130 aa)) is N-terminal hotdog fold. The 307-residue stretch at 1263–1569 (HHLVSQDDNG…FRKMPRTTLH (307 aa)) folds into the PKS/mFAS DH domain. The product template (PT) domain stretch occupies residues 1267-1568 (SQDDNGKEQS…RFRKMPRTTL (302 aa)). The Proton acceptor; for dehydratase activity role is filled by H1295. Residues 1416–1569 (ASGIANRFQG…FRKMPRTTLH (154 aa)) are C-terminal hotdog fold. The active-site Proton donor; for dehydratase activity is D1481. Residues 1573–1621 (GKAVPPKPAKETSHPSVEATAPATTNGRSSATNAQAEAPAPPVNGSNGH) are disordered. Residues 1594-1607 (PATTNGRSSATNAQ) show a composition bias toward polar residues. The 78-residue stretch at 1620 to 1697 (GHRKTVESVL…DAQRQLRTLE (78 aa)) folds into the Carrier domain. Position 1657 is an O-(pantetheine 4'-phosphoryl)serine (S1657). Residues 1725 to 1923 (KRECNVVLMQ…ERTFVVWAKK (199 aa)) are thioesterase (TE) domain.

It participates in secondary metabolite biosynthesis; terpenoid biosynthesis. Its function is as follows. Non-reducing polyketide synthase; part of the gene cluster that mediates the biosynthesis of the meroterpenoids arthripenoids. The pathway begins with the HR-PKS atnH that catalyzes two chain-extension steps to form a reduced triketide, which then primes the SAT domain in the NR-PKS atnG to initiate three more cycles of extension to give a linear hexaketide corresponding to the polyketide part of arthripenoids. The FAD-dependent monooxygenase atnJ then performs an oxidative decarboxylation at C11 of the atnH/atnG product, via an electrophilic aromatic hydroxylation with concomitant ipso-decarboxylation. The membrane-bound polyprenyl transferase atnF then introduces a farnesyl group before the FAD-dependent monooxygenase atnK functions as the first epoxidase on terminal C12'-C13' olefin, followed by a second epoxidation on C7'-C8' catalyzed by atnA. The terpene cyclase/mutase atnI then initiates the sequential tricyclic ring formation through protonation of the terminal epoxide and catalyzes the regioselective and stereoselective 6/6/6-tricyclic ring formation. The cytochrome P450 monooxygenase atnM is responsible for hydroxylating both C1' and C10'. The next steps may involve ketoreduction and acetyl transfer by the ketoreductase atnB and the acetyltransferase atnC, and lead to the production of arthripenoid B, the final biosynthetic product of the atn cluster. The hydroquinone moiety in arthripenoid B is prone to undergo spontaneous oxidation to afford a benzoquinone compound, a key intermediate for generating structure diversity. For instance, addition of a cysteine followed by ring contraction gives arthripenoid A, tautomerization gives the main product arthripenoid C, addition of a molecular of water or amine affords arthripenoid D or E, respectively, and loss of one water forms arthripenoid F. The sequence is that of Non-reducing polyketide synthase atnG from Arthrinium sp.